A 377-amino-acid chain; its full sequence is tRNA N6-adenosine threonylcarbamoyltransferase (377 aa).

2 residues coordinate Fe cation: His129 and His133. Residues 151 to 155, Asp184, Gly197, and Asn298 contribute to the substrate site; that span reads LVSGG. Asp326 serves as a coordination point for Fe cation. The disordered stretch occupies residues 358-377; it reads DGAAAKSDPAIGSGRKGPKA.

It belongs to the KAE1 / TsaD family. The cofactor is Fe(2+).

It is found in the cytoplasm. It catalyses the reaction L-threonylcarbamoyladenylate + adenosine(37) in tRNA = N(6)-L-threonylcarbamoyladenosine(37) in tRNA + AMP + H(+). Required for the formation of a threonylcarbamoyl group on adenosine at position 37 (t(6)A37) in tRNAs that read codons beginning with adenine. Is involved in the transfer of the threonylcarbamoyl moiety of threonylcarbamoyl-AMP (TC-AMP) to the N6 group of A37, together with TsaE and TsaB. TsaD likely plays a direct catalytic role in this reaction. In Maricaulis maris (strain MCS10) (Caulobacter maris), this protein is tRNA N6-adenosine threonylcarbamoyltransferase.